A 188-amino-acid polypeptide reads, in one-letter code: Probable nicotinate-nucleotide adenylyltransferase (188 aa).

It belongs to the NadD family.

The enzyme catalyses nicotinate beta-D-ribonucleotide + ATP + H(+) = deamido-NAD(+) + diphosphate. It functions in the pathway cofactor biosynthesis; NAD(+) biosynthesis; deamido-NAD(+) from nicotinate D-ribonucleotide: step 1/1. Functionally, catalyzes the reversible adenylation of nicotinate mononucleotide (NaMN) to nicotinic acid adenine dinucleotide (NaAD). This chain is Probable nicotinate-nucleotide adenylyltransferase, found in Listeria welshimeri serovar 6b (strain ATCC 35897 / DSM 20650 / CCUG 15529 / CIP 8149 / NCTC 11857 / SLCC 5334 / V8).